Reading from the N-terminus, the 90-residue chain is Putative regulatory protein NT01CX_2250 (90 aa).

This sequence belongs to the RemA family.

In Clostridium novyi (strain NT), this protein is Putative regulatory protein NT01CX_2250.